A 234-amino-acid chain; its full sequence is Opacity protein opA56 (234 aa).

Residue Ala-1 is a signal peptide.

Belongs to the opacity porin family.

The protein resides in the cell outer membrane. Its function is as follows. Implicated in a number of adherence functions. OPA proteins are implicated in pathogenesis and are subject to phase variation. This is Opacity protein opA56 (opaF) from Neisseria gonorrhoeae.